A 355-amino-acid polypeptide reads, in one-letter code: Peptide chain release factor 1 (355 aa).

Position 233 is an N5-methylglutamine (Q233). Basic and acidic residues predominate over residues 280-293 (KRRQKEQERSDSRR). The tract at residues 280–310 (KRRQKEQERSDSRRGQVGSGDRSERIRTYNF) is disordered.

The protein belongs to the prokaryotic/mitochondrial release factor family. In terms of processing, methylated by PrmC. Methylation increases the termination efficiency of RF1.

The protein localises to the cytoplasm. Peptide chain release factor 1 directs the termination of translation in response to the peptide chain termination codons UAG and UAA. In Rickettsia prowazekii (strain Madrid E), this protein is Peptide chain release factor 1 (prfA).